The chain runs to 359 residues: Fructose-bisphosphate aldolase class 2 (359 aa).

Position 62 (Ser-62) interacts with D-glyceraldehyde 3-phosphate. Asp-110 acts as the Proton donor in catalysis. The Zn(2+) site is built by His-111, Asp-145, Glu-175, and His-227. Residue Gly-228 participates in dihydroxyacetone phosphate binding. His-265 is a Zn(2+) binding site. Residues 266–268 and 287–290 each bind dihydroxyacetone phosphate; these read GGS and NIDT.

Belongs to the class II fructose-bisphosphate aldolase family. It depends on Zn(2+) as a cofactor.

The catalysed reaction is beta-D-fructose 1,6-bisphosphate = D-glyceraldehyde 3-phosphate + dihydroxyacetone phosphate. Its pathway is carbohydrate degradation; glycolysis; D-glyceraldehyde 3-phosphate and glycerone phosphate from D-glucose: step 4/4. Functionally, catalyzes the aldol condensation of dihydroxyacetone phosphate (DHAP or glycerone-phosphate) with glyceraldehyde 3-phosphate (G3P) to form fructose 1,6-bisphosphate (FBP) in gluconeogenesis and the reverse reaction in glycolysis. In Buchnera aphidicola subsp. Baizongia pistaciae (strain Bp), this protein is Fructose-bisphosphate aldolase class 2 (fbaA).